A 485-amino-acid chain; its full sequence is Aspartyl/glutamyl-tRNA(Asn/Gln) amidotransferase subunit B (485 aa).

The protein belongs to the GatB/GatE family. GatB subfamily. As to quaternary structure, heterotrimer of A, B and C subunits.

It catalyses the reaction L-glutamyl-tRNA(Gln) + L-glutamine + ATP + H2O = L-glutaminyl-tRNA(Gln) + L-glutamate + ADP + phosphate + H(+). It carries out the reaction L-aspartyl-tRNA(Asn) + L-glutamine + ATP + H2O = L-asparaginyl-tRNA(Asn) + L-glutamate + ADP + phosphate + 2 H(+). Functionally, allows the formation of correctly charged Asn-tRNA(Asn) or Gln-tRNA(Gln) through the transamidation of misacylated Asp-tRNA(Asn) or Glu-tRNA(Gln) in organisms which lack either or both of asparaginyl-tRNA or glutaminyl-tRNA synthetases. The reaction takes place in the presence of glutamine and ATP through an activated phospho-Asp-tRNA(Asn) or phospho-Glu-tRNA(Gln). The sequence is that of Aspartyl/glutamyl-tRNA(Asn/Gln) amidotransferase subunit B from Cupriavidus taiwanensis (strain DSM 17343 / BCRC 17206 / CCUG 44338 / CIP 107171 / LMG 19424 / R1) (Ralstonia taiwanensis (strain LMG 19424)).